The primary structure comprises 79 residues: Large ribosomal subunit protein uL29 (79 aa).

This sequence belongs to the universal ribosomal protein uL29 family.

In Gluconacetobacter diazotrophicus (strain ATCC 49037 / DSM 5601 / CCUG 37298 / CIP 103539 / LMG 7603 / PAl5), this protein is Large ribosomal subunit protein uL29.